The primary structure comprises 2417 residues: Protein pad-1 (2417 aa).

Disordered regions lie at residues 409–437 (SSNS…DREG), 449–475 (SNKD…PDEE), 994–1029 (TSTG…DDDT), and 1957–2032 (SMSN…RRDP). Composition is skewed to low complexity over residues 456-468 (TSVT…NASS) and 1002-1024 (DPSA…VVPA). Over residues 1969–1982 (DNPSGSTRNSTLSL) the composition is skewed to polar residues. The segment covering 2003-2014 (SKSENMKIEKKS) has biased composition (basic and acidic residues). Over residues 2015–2025 (SSNLRASIKDT) the composition is skewed to polar residues.

It belongs to the DOP1 family.

Its function is as follows. May be involved in protein traffic between late Golgi and early endosomes. Essential for cell patterning during gastrulation. This chain is Protein pad-1 (pad-1), found in Caenorhabditis elegans.